Consider the following 226-residue polypeptide: Putative N-acetylmannosamine-6-phosphate 2-epimerase (226 aa).

This sequence belongs to the NanE family.

It carries out the reaction an N-acyl-D-glucosamine 6-phosphate = an N-acyl-D-mannosamine 6-phosphate. The protein operates within amino-sugar metabolism; N-acetylneuraminate degradation; D-fructose 6-phosphate from N-acetylneuraminate: step 3/5. Its function is as follows. Converts N-acetylmannosamine-6-phosphate (ManNAc-6-P) to N-acetylglucosamine-6-phosphate (GlcNAc-6-P). This is Putative N-acetylmannosamine-6-phosphate 2-epimerase from Mycoplasma mycoides subsp. mycoides SC (strain CCUG 32753 / NCTC 10114 / PG1).